We begin with the raw amino-acid sequence, 128 residues long: Small ribosomal subunit protein uS12 (128 aa).

Residues Met1–Lys30 form a disordered region. 3-methylthioaspartic acid is present on Asp89. Positions Gly106 to Lys128 are disordered.

This sequence belongs to the universal ribosomal protein uS12 family. As to quaternary structure, part of the 30S ribosomal subunit. Contacts proteins S8 and S17. May interact with IF1 in the 30S initiation complex.

Its function is as follows. With S4 and S5 plays an important role in translational accuracy. Interacts with and stabilizes bases of the 16S rRNA that are involved in tRNA selection in the A site and with the mRNA backbone. Located at the interface of the 30S and 50S subunits, it traverses the body of the 30S subunit contacting proteins on the other side and probably holding the rRNA structure together. The combined cluster of proteins S8, S12 and S17 appears to hold together the shoulder and platform of the 30S subunit. The polypeptide is Small ribosomal subunit protein uS12 (Dictyoglomus thermophilum (strain ATCC 35947 / DSM 3960 / H-6-12)).